Consider the following 463-residue polypeptide: Lipase 5 (463 aa).

The N-terminal stretch at 1-14 is a signal peptide; it reads MLYLILFLIAPIYA. Cys-110 and Cys-281 are joined by a disulfide. Residue Ser-194 is the Charge relay system of the active site. Asn-229 carries an N-linked (GlcNAc...) asparagine glycan. Catalysis depends on charge relay system residues Asp-343 and His-376. Cysteines 359 and 404 form a disulfide.

It belongs to the AB hydrolase superfamily. Lipase family. Class Lip subfamily.

It is found in the secreted. The enzyme catalyses a triacylglycerol + H2O = a diacylglycerol + a fatty acid + H(+). Fe(2)+, Fe(3+), Hg(2+) as well as ethylenediaminetetraacetic acid (EDTA) and phenylmethanesulfonyl fluoride (PMSF) strongly inhibit the lipase activity. Surfactants such as Tween 20, Tween 80 and TritonX-100 show also inhibitory effect in the lipase activity. Sodium dodecyl sulfate (SDS) sharply decreases the lipase activity by 85%. Methanol, ethanol, and acetone have also negative effect on the lipase activity, with residual activities at 48%, 24% and 44% respectively. Finally, lipase activity is almost lost in the presence of isopropanol alcohol. In terms of biological role, secreted lipase that is able to hydrolyze both the neutral triacylglycerols and the monopalmitate ester Tween 40, allowing the use of hydrolyzed products as carbon sources. Exhibits a preference for the short and medium chain length p-NP (C4 and C8 acyl group) esters rather than the long chain length p-NP esters (C12, C16 and C18 acyl group). Has broad lipolytic activity, which may be important for colonization and subsequent infection, therefore contributing to the persistence and virulence in human tissue. This is Lipase 5 from Candida albicans (strain SC5314 / ATCC MYA-2876) (Yeast).